The chain runs to 540 residues: MNTAVTLLTEQAPQPIEEFGQLERQIIIILDFGSQYSELIARRIRETQVYSEVLSYRTPAEHLRQLNPKGIILSGGPSSVYSDRAPHCDPEIWNLGVPILGVCYGMQLMVNQLGGEVAKADRGEYGKASLHIDDPTDLLTNVEDGTTMWMSHGDSVTKMPPGFEVLAHTDNTPCAAVADHEKKLYGVQFHPEVVHSVGGLALIRNFVYHICECEPTWTTAAFVEEAIREVRAKVGDKRVLLALSGGVDSSTLAFLMHKAIGDQLTCVFIDQGFMRKYEPERLVKLFQEQFHIPVEYVNARDRFLDIMSGVTDPEEKRRRIGHEFIQVFEETSKNLGPFDYLAQGTLYPDVIESADTNVDPQTGERVAVKIKSHHNVGGLPKDLRFKLVEPLRKLFKDEVRKVGRSVGLPEEIVQRQPFPGPGLAIRILGEVTADRLNILRDADLIVRQEINQRGLYNEYWQAFAVLLPIRSVGVMGDQRTYAYPIVLRIVKSEDGMTADWARVPYDVLEAISNRIVNEVKGVNRVVFDITSKPPGTIEWE.

The 191-residue stretch at 26-216 folds into the Glutamine amidotransferase type-1 domain; the sequence is IIIILDFGSQ…VYHICECEPT (191 aa). The Nucleophile role is filled by Cys103. Residues His190 and Glu192 contribute to the active site. The region spanning 217–415 is the GMPS ATP-PPase domain; that stretch reads WTTAAFVEEA…VGLPEEIVQR (199 aa). 244–250 is an ATP binding site; that stretch reads SGGVDSS.

Homodimer.

It carries out the reaction XMP + L-glutamine + ATP + H2O = GMP + L-glutamate + AMP + diphosphate + 2 H(+). Its pathway is purine metabolism; GMP biosynthesis; GMP from XMP (L-Gln route): step 1/1. Functionally, catalyzes the synthesis of GMP from XMP. In Nostoc sp. (strain PCC 7120 / SAG 25.82 / UTEX 2576), this protein is GMP synthase [glutamine-hydrolyzing].